We begin with the raw amino-acid sequence, 152 residues long: Probable prefoldin subunit 5 (152 aa).

It belongs to the prefoldin subunit alpha family. As to quaternary structure, heterohexamer of two PFD-alpha type and four PFD-beta type subunits.

Its function is as follows. Binds specifically to cytosolic chaperonin (c-CPN) and transfers target proteins to it. Binds to nascent polypeptide chain and promotes folding in an environment in which there are many competing pathways for nonnative proteins. In Caenorhabditis elegans, this protein is Probable prefoldin subunit 5 (pfd-5).